The following is a 388-amino-acid chain: Succinate--CoA ligase [ADP-forming] subunit beta (388 aa).

Residues 9 to 244 (KQLFARYGLP…PSQEDSREAH (236 aa)) form the ATP-grasp domain. ATP is bound by residues Lys-46, 53-55 (GRG), Glu-99, Thr-102, and Glu-107. Mg(2+) contacts are provided by Asn-199 and Asp-213. Substrate is bound by residues Asn-264 and 321–323 (GIV).

It belongs to the succinate/malate CoA ligase beta subunit family. As to quaternary structure, heterotetramer of two alpha and two beta subunits. The cofactor is Mg(2+).

It carries out the reaction succinate + ATP + CoA = succinyl-CoA + ADP + phosphate. It catalyses the reaction GTP + succinate + CoA = succinyl-CoA + GDP + phosphate. It functions in the pathway carbohydrate metabolism; tricarboxylic acid cycle; succinate from succinyl-CoA (ligase route): step 1/1. Functionally, succinyl-CoA synthetase functions in the citric acid cycle (TCA), coupling the hydrolysis of succinyl-CoA to the synthesis of either ATP or GTP and thus represents the only step of substrate-level phosphorylation in the TCA. The beta subunit provides nucleotide specificity of the enzyme and binds the substrate succinate, while the binding sites for coenzyme A and phosphate are found in the alpha subunit. In Erwinia tasmaniensis (strain DSM 17950 / CFBP 7177 / CIP 109463 / NCPPB 4357 / Et1/99), this protein is Succinate--CoA ligase [ADP-forming] subunit beta.